A 434-amino-acid chain; its full sequence is Mitochondrial distribution and morphology protein 10 (434 aa).

Belongs to the MDM10 family. As to quaternary structure, component of the ER-mitochondria encounter structure (ERMES) or MDM complex, composed of mmm1, mdm10, mdm12 and mdm34. Associates with the mitochondrial outer membrane sorting assembly machinery SAM(core) complex.

The protein resides in the mitochondrion outer membrane. In terms of biological role, component of the ERMES/MDM complex, which serves as a molecular tether to connect the endoplasmic reticulum and mitochondria. Components of this complex are involved in the control of mitochondrial shape and protein biogenesis and may function in phospholipid exchange. mdm10 is involved in the late assembly steps of the general translocase of the mitochondrial outer membrane (TOM complex). Functions in the tom40-specific route of the assembly of outer membrane beta-barrel proteins, including the association of tom40 with the receptor tom22 and small TOM proteins. Can associate with the SAM(core) complex as well as the mdm12-mmm1 complex, both involved in late steps of the major beta-barrel assembly pathway, that is responsible for biogenesis of all outer membrane beta-barrel proteins. May act as a switch that shuttles between both complexes and channels precursor proteins into the tom40-specific pathway. Plays a role in mitochondrial morphology and in the inheritance of mitochondria. This is Mitochondrial distribution and morphology protein 10 (mdmB) from Aspergillus niger (strain ATCC MYA-4892 / CBS 513.88 / FGSC A1513).